Reading from the N-terminus, the 440-residue chain is Ribulose bisphosphate carboxylase large chain (440 aa).

An N6,N6,N6-trimethyllysine modification is found at lysine 3. Substrate is bound by residues asparagine 112 and threonine 162. The Proton acceptor role is filled by lysine 164. Lysine 166 serves as a coordination point for substrate. Residues lysine 190, aspartate 192, and glutamate 193 each coordinate Mg(2+). Position 190 is an N6-carboxylysine (lysine 190). Residue histidine 283 is the Proton acceptor of the active site. Substrate contacts are provided by arginine 284, histidine 316, and serine 368.

The protein belongs to the RuBisCO large chain family. Type I subfamily. In terms of assembly, heterohexadecamer of 8 large chains and 8 small chains; disulfide-linked. The disulfide link is formed within the large subunit homodimers. Mg(2+) is required as a cofactor. The disulfide bond which can form in the large chain dimeric partners within the hexadecamer appears to be associated with oxidative stress and protein turnover.

The protein resides in the plastid. Its subcellular location is the chloroplast. The catalysed reaction is 2 (2R)-3-phosphoglycerate + 2 H(+) = D-ribulose 1,5-bisphosphate + CO2 + H2O. The enzyme catalyses D-ribulose 1,5-bisphosphate + O2 = 2-phosphoglycolate + (2R)-3-phosphoglycerate + 2 H(+). RuBisCO catalyzes two reactions: the carboxylation of D-ribulose 1,5-bisphosphate, the primary event in carbon dioxide fixation, as well as the oxidative fragmentation of the pentose substrate in the photorespiration process. Both reactions occur simultaneously and in competition at the same active site. The protein is Ribulose bisphosphate carboxylase large chain of Bambusa multiplex (Hedge bamboo).